A 116-amino-acid chain; its full sequence is Helper of Tim protein 13 (116 aa).

The CHY-type; degenerate zinc-finger motif lies at T10–S94. Residues C17, H19, C40, C43, C68, C71, C89, and C92 each contribute to the Zn(2+) site.

In terms of assembly, interacts with the small Tim proteins TIM8, TIM9, TIM10, TIM12, and TIM13.

It localises to the mitochondrion intermembrane space. It is found in the mitochondrion membrane. Its function is as follows. Required for the assembly or recycling of the small Tim proteins in the mitochondrial intermembrane, thereby participating in the import and insertion of multi-pass transmembrane proteins into the mitochondrial inner membrane. Probably acts by facilitating the formation of disulfide bonds in small Tim proteins. The chain is Helper of Tim protein 13 (HOT13) from Saccharomyces cerevisiae (strain ATCC 204508 / S288c) (Baker's yeast).